We begin with the raw amino-acid sequence, 194 residues long: Peptidyl-tRNA hydrolase (194 aa).

Residue Tyr21 participates in tRNA binding. The active-site Proton acceptor is the His26. Residues Tyr72, Asn74, and Asn120 each contribute to the tRNA site.

It belongs to the PTH family. Monomer.

It localises to the cytoplasm. The catalysed reaction is an N-acyl-L-alpha-aminoacyl-tRNA + H2O = an N-acyl-L-amino acid + a tRNA + H(+). Its function is as follows. Hydrolyzes ribosome-free peptidyl-tRNAs (with 1 or more amino acids incorporated), which drop off the ribosome during protein synthesis, or as a result of ribosome stalling. Functionally, catalyzes the release of premature peptidyl moieties from peptidyl-tRNA molecules trapped in stalled 50S ribosomal subunits, and thus maintains levels of free tRNAs and 50S ribosomes. The sequence is that of Peptidyl-tRNA hydrolase from Halorhodospira halophila (strain DSM 244 / SL1) (Ectothiorhodospira halophila (strain DSM 244 / SL1)).